The sequence spans 375 residues: MGRAISKSGPVRALGAMSGTSLDGVDVAVLETDGRDILGFGETGYRAYSDAEREVLRAALGQWTGDAVAAAARVVEAAHIEVMTDHADVDLIGFHGQTVAHAPRLQGTLQVGDGGVLAEALGRPVVWDFRSDDVSMGGEGAPLAPFFHHACARYIGATEPLCFLNLGGVGNVTYVDPRKARPEDEGALLAFDTGPANAPINDFLQSRLGLAMDEGGRIASGGAVENGALELFLAEPYFARMPPKSLDRNDFPEMIGLVTELSDADATATLTAMCAAAVAQGMEHCPKAPSKVLVTGGGRHNPVLMEMLRVSLDCPVEPVETVGLDGDMLEAQAFAYLAVRVARGLPTSAPSTTGVRACVGGGTVTVPEGWTARKT.

Residue 19 to 26 (GTSLDGVD) coordinates ATP.

It belongs to the anhydro-N-acetylmuramic acid kinase family.

It catalyses the reaction 1,6-anhydro-N-acetyl-beta-muramate + ATP + H2O = N-acetyl-D-muramate 6-phosphate + ADP + H(+). It participates in amino-sugar metabolism; 1,6-anhydro-N-acetylmuramate degradation. The protein operates within cell wall biogenesis; peptidoglycan recycling. In terms of biological role, catalyzes the specific phosphorylation of 1,6-anhydro-N-acetylmuramic acid (anhMurNAc) with the simultaneous cleavage of the 1,6-anhydro ring, generating MurNAc-6-P. Is required for the utilization of anhMurNAc either imported from the medium or derived from its own cell wall murein, and thus plays a role in cell wall recycling. This Ruegeria sp. (strain TM1040) (Silicibacter sp.) protein is Anhydro-N-acetylmuramic acid kinase.